Reading from the N-terminus, the 31-residue chain is IVAVLHSSEGVAGTITFIADSQIPLTGPNSI.

Belongs to the Cu-Zn superoxide dismutase family. Cu cation serves as cofactor. Zn(2+) is required as a cofactor.

The protein resides in the cytoplasm. It catalyses the reaction 2 superoxide + 2 H(+) = H2O2 + O2. In terms of biological role, destroys radicals which are normally produced within the cells and which are toxic to biological systems. This Striga hermonthica (Purple witchweed) protein is Superoxide dismutase [Cu-Zn].